We begin with the raw amino-acid sequence, 162 residues long: Dihydrofolate reductase (162 aa).

One can recognise a DHFR domain in the interval 3 to 161; that stretch reads KITLIAACAE…TRYAFVHYLR (159 aa). Residue 7–9 participates in substrate binding; that stretch reads IAA. NADP(+) contacts are provided by residues 8–9 and 16–21; these read AA and IGAGNA. Aspartate 29 lines the substrate pocket. Residue 45–48 coordinates NADP(+); it reads GRKT. Arginine 60 is a substrate binding site. Residues 65–68 and 98–103 each bind NADP(+); these read ISRQ and MGGAQI. Threonine 117 contributes to the substrate binding site.

This sequence belongs to the dihydrofolate reductase family.

The enzyme catalyses (6S)-5,6,7,8-tetrahydrofolate + NADP(+) = 7,8-dihydrofolate + NADPH + H(+). Its pathway is cofactor biosynthesis; tetrahydrofolate biosynthesis; 5,6,7,8-tetrahydrofolate from 7,8-dihydrofolate: step 1/1. In terms of biological role, key enzyme in folate metabolism. Catalyzes an essential reaction for de novo glycine and purine synthesis, and for DNA precursor synthesis. This chain is Dihydrofolate reductase (folA), found in Neisseria meningitidis serogroup B (strain ATCC BAA-335 / MC58).